We begin with the raw amino-acid sequence, 59 residues long: Large ribosomal subunit protein uL30 (59 aa).

It belongs to the universal ribosomal protein uL30 family. As to quaternary structure, part of the 50S ribosomal subunit.

This is Large ribosomal subunit protein uL30 from Aliivibrio salmonicida (strain LFI1238) (Vibrio salmonicida (strain LFI1238)).